Reading from the N-terminus, the 174-residue chain is Small ribosomal subunit protein uS5 (174 aa).

The S5 DRBM domain maps to Leu16–Val79.

Belongs to the universal ribosomal protein uS5 family. As to quaternary structure, part of the 30S ribosomal subunit. Contacts proteins S4 and S8.

With S4 and S12 plays an important role in translational accuracy. Functionally, located at the back of the 30S subunit body where it stabilizes the conformation of the head with respect to the body. In Anaplasma marginale (strain Florida), this protein is Small ribosomal subunit protein uS5.